A 493-amino-acid chain; its full sequence is MGLLDPSQKEVLRFAVNCRILTLVLQALFNLIIPDHHADAFCPPRLAPSGSADQLVEGLLGGLSRWDAEHFLFIAEHGYLYEHNFAFFPGFPLALLMGTELLRPLQGLLSQRSCLLVSVALLNLLFSVLAAVALHDLGCLVLHCPRQALCAALLFCISPANVFLAAGYSEALFAFLTFSAMGQLERGRGWASGLLFALAAGVRSNGLVSLGFLLHSQCRGFCSSLAVLSPWKPLVKLMASVCLSVLIVSLPFALFQYRAYIQFCSPGSAPSIPEPLLQLAADKGYRLAGENAPPWCSWDLPLIYNYIQDVYWNVGLLRYYELKQVPNFLLATPVTVLVVWATWTYVTTHPWLCLTLGLQRTKDRENPEKPHRGFLSPKVFVYLVHAAALLVFGGLCMHVQVLTRFLASSTPIMYWFPAHLLQDQEPLLRCVDTEPGKLPQEKSPPGQKAPRNCLMKLFYDWKRCSPVTRCVLVYFLTYWLLGLILHCNFLPWT.

Residues 1 to 13 (MGLLDPSQKEVLR) lie on the Cytoplasmic side of the membrane. A helical membrane pass occupies residues 14-34 (FAVNCRILTLVLQALFNLIIP). Over 35-77 (DHHADAFCPPRLAPSGSADQLVEGLLGGLSRWDAEHFLFIAEH) the chain is Lumenal. The chain crosses the membrane as a helical span at residues 78-98 (GYLYEHNFAFFPGFPLALLMG). Residues 99–113 (TELLRPLQGLLSQRS) lie on the Cytoplasmic side of the membrane. Residues 114–134 (CLLVSVALLNLLFSVLAAVAL) form a helical membrane-spanning segment. Topologically, residues 135-136 (HD) are lumenal. The chain crosses the membrane as a helical span at residues 137–157 (LGCLVLHCPRQALCAALLFCI). Over 158-161 (SPAN) the chain is Cytoplasmic. The chain crosses the membrane as a helical span at residues 162–182 (VFLAAGYSEALFAFLTFSAMG). Residues 183–192 (QLERGRGWAS) are Lumenal-facing. Residues 193–213 (GLLFALAAGVRSNGLVSLGFL) form a helical membrane-spanning segment. At 214–234 (LHSQCRGFCSSLAVLSPWKPL) the chain is on the cytoplasmic side. Residues 235 to 255 (VKLMASVCLSVLIVSLPFALF) traverse the membrane as a helical segment. The Lumenal segment spans residues 256-327 (QYRAYIQFCS…RYYELKQVPN (72 aa)). The helical transmembrane segment at 328–348 (FLLATPVTVLVVWATWTYVTT) threads the bilayer. At 349-378 (HPWLCLTLGLQRTKDRENPEKPHRGFLSPK) the chain is on the cytoplasmic side. The helical transmembrane segment at 379–399 (VFVYLVHAAALLVFGGLCMHV) threads the bilayer. Residues 400 to 469 (QVLTRFLASS…DWKRCSPVTR (70 aa)) lie on the Lumenal side of the membrane. The helical transmembrane segment at 470–490 (CVLVYFLTYWLLGLILHCNFL) threads the bilayer. At 491–493 (PWT) the chain is on the cytoplasmic side.

It belongs to the PIGV family. Not N-glycosylated.

It localises to the endoplasmic reticulum membrane. Its pathway is glycolipid biosynthesis; glycosylphosphatidylinositol-anchor biosynthesis. Alpha-1,6-mannosyltransferase that catalyzes the transfer of the second mannose, via an alpha-1,6 bond, from a dolichol-phosphate-mannose (Dol-P-Man) to the alpha-D-Man-(1-&gt;4)-alpha-D-GlcN-(1-&gt;6)-(1-radyl,2-acyl-sn-glycero-3-phospho)-2-acyl-inositol (also termed H2) intermediate to generate an alpha-D-Man-(1-&gt;6)-alpha-D-Man-(1-&gt;4)-alpha-D-GlcN-(1-&gt;6)-(1-radyl,2-acyl-sn-glycero-3-phospho)-2-acyl-inositol (also termed H3) and participates in the seventh step of the glycosylphosphatidylinositol-anchor biosynthesis. Also transfers the second mannose on a 2-PEtn-alpha-D-Man-(1-&gt;4)-alpha-D-GlcN-(1-&gt;6)-(1-radyl,2-acyl-sn-glycero-3-phospho)-2-acyl-inositol (also termed H5). This chain is GPI alpha-1,6-mannosyltransferase 2, found in Mus musculus (Mouse).